The sequence spans 261 residues: Pantothenate synthetase (261 aa).

Residue Met-29–His-36 coordinates ATP. Residue His-36 is the Proton donor of the active site. Gln-60 lines the (R)-pantoate pocket. Beta-alanine is bound at residue Gln-60. Gly-147–Asp-150 provides a ligand contact to ATP. Residue Gln-153 participates in (R)-pantoate binding. Residue Leu-184–Arg-187 participates in ATP binding.

The protein belongs to the pantothenate synthetase family. As to quaternary structure, homodimer.

The protein resides in the cytoplasm. It carries out the reaction (R)-pantoate + beta-alanine + ATP = (R)-pantothenate + AMP + diphosphate + H(+). The protein operates within cofactor biosynthesis; (R)-pantothenate biosynthesis; (R)-pantothenate from (R)-pantoate and beta-alanine: step 1/1. Its function is as follows. Catalyzes the condensation of pantoate with beta-alanine in an ATP-dependent reaction via a pantoyl-adenylate intermediate. This Francisella tularensis subsp. tularensis (strain FSC 198) protein is Pantothenate synthetase.